Here is a 352-residue protein sequence, read N- to C-terminus: Putative [LysW]-L-2-aminoadipate/[LysW]-L-glutamate phosphate reductase (352 aa).

Residues 10–13 and 34–36 contribute to the NADP(+) site; these read SGFT and SRK. The active site involves cysteine 151. Asparagine 319 contributes to the NADP(+) binding site.

Belongs to the NAGSA dehydrogenase family. Type 1 subfamily. LysY sub-subfamily.

The protein resides in the cytoplasm. It carries out the reaction [amino-group carrier protein]-C-terminal-N-(1-carboxy-5-oxopentan-1-yl)-L-glutamine + phosphate + NADP(+) = [amino-group carrier protein]-C-terminal-N-(1-carboxy-5-phosphooxy-5-oxopentan-1-yl)-L-glutamine + NADPH + H(+). The catalysed reaction is [amino-group carrier protein]-C-terminal-gamma-(L-glutamyl-5-semialdehyde)-L-glutamate + phosphate + NADP(+) = [amino-group carrier protein]-C-terminal-gamma-(5-phospho-L-glutamyl)-L-glutamate + NADPH + H(+). It participates in amino-acid biosynthesis; L-lysine biosynthesis via AAA pathway; L-lysine from L-alpha-aminoadipate (Thermus route): step 3/5. Its pathway is amino-acid biosynthesis; L-arginine biosynthesis. Involved in both the arginine and lysine biosynthetic pathways. In Pyrobaculum neutrophilum (strain DSM 2338 / JCM 9278 / NBRC 100436 / V24Sta) (Thermoproteus neutrophilus), this protein is Putative [LysW]-L-2-aminoadipate/[LysW]-L-glutamate phosphate reductase.